Here is a 417-residue protein sequence, read N- to C-terminus: Probable histone-binding protein lin-53 (417 aa).

WD repeat units lie at residues 118 to 158 (NHEG…AVPR), 170 to 210 (GHTK…NVAG), 220 to 260 (GHES…PGHC), 263 to 303 (AHSA…MKLH), 307 to 347 (SHRD…EDQS), and 364 to 404 (GHTA…YNEV).

This sequence belongs to the WD repeat RBAP46/RBAP48/MSI1 family. Binds directly to helix 1 of the histone fold of histone H4, a region that is not accessible when H4 is in chromatin. Probable component of a NuRD-like complex, composed of at least lin-53 and hda-1. Interacts with lin-35. Interacts with hda-1; the interaction is direct. Component of the DRM complex, at least composed of lin-9, lin-35, lin-37, lin-52, lin-53, lin-54- dpl-1 and efl-1. Interacts with hcp-3.

It is found in the nucleus. Its subcellular location is the chromosome. The protein resides in the centromere. Functionally, core histone-binding subunit that may target chromatin assembly factors, chromatin remodeling factors and histone deacetylases to their histone substrates in a manner that is regulated by nucleosomal DNA. Required for hcp-3 and his-1 stabilization, localization of hcp-3 to centromeres and for proper chromosome segregation. Synthetic multivulva class B (synMuvB) protein. SynMuvB proteins are required to repress the induction of vulval development by Ras signaling and probably act by forming the multiprotein DRM complex that represses transcription. The chain is Probable histone-binding protein lin-53 from Caenorhabditis elegans.